The primary structure comprises 322 residues: Probable heme-iron transport system permease protein IsdF (322 aa).

Helical transmembrane passes span 9 to 29 (LLFL…FVTG), 61 to 81 (ILIA…LQAA), 89 to 109 (ANII…MLFI), 114 to 134 (FYLP…IIVL), 143 to 163 (VSMI…LEIL), 179 to 199 (IWSD…LTLL), 233 to 253 (VFLA…GIIV), 267 to 287 (VLIP…DLLG), and 294 to 314 (LEIP…IYLI).

The protein belongs to the binding-protein-dependent transport system permease family. FecCD subfamily.

The protein resides in the cell membrane. Functionally, part of the binding-protein-dependent transport system for heme-iron. Responsible for the translocation of the substrate across the membrane. This Staphylococcus aureus (strain bovine RF122 / ET3-1) protein is Probable heme-iron transport system permease protein IsdF (isdF).